Reading from the N-terminus, the 166-residue chain is Protein-export protein SecB (166 aa).

Belongs to the SecB family. As to quaternary structure, homotetramer, a dimer of dimers. One homotetramer interacts with 1 SecA dimer.

Its subcellular location is the cytoplasm. Its function is as follows. One of the proteins required for the normal export of preproteins out of the cell cytoplasm. It is a molecular chaperone that binds to a subset of precursor proteins, maintaining them in a translocation-competent state. It also specifically binds to its receptor SecA. The protein is Protein-export protein SecB of Actinobacillus succinogenes (strain ATCC 55618 / DSM 22257 / CCUG 43843 / 130Z).